A 126-amino-acid polypeptide reads, in one-letter code: Fluoride-specific ion channel FluC (126 aa).

The next 4 helical transmembrane spans lie at 4–24, 35–55, 67–87, and 100–120; these read YLYI…VSGV, IGTF…TGLF, LLIL…MFES, and ALNI…GLAL. Na(+) is bound by residues glycine 75 and threonine 78.

Belongs to the fluoride channel Fluc/FEX (TC 1.A.43) family.

It is found in the cell inner membrane. The enzyme catalyses fluoride(in) = fluoride(out). With respect to regulation, na(+) is not transported, but it plays an essential structural role and its presence is essential for fluoride channel function. Its function is as follows. Fluoride-specific ion channel. Important for reducing fluoride concentration in the cell, thus reducing its toxicity. This is Fluoride-specific ion channel FluC from Maridesulfovibrio salexigens (strain ATCC 14822 / DSM 2638 / NCIMB 8403 / VKM B-1763) (Desulfovibrio salexigens).